The chain runs to 335 residues: L-lactate dehydrogenase B chain (335 aa).

NAD(+) contacts are provided by residues 29–57 (GQVG…VEDK) and arginine 99. Residues arginine 106, asparagine 138, and arginine 169 each contribute to the substrate site. An NAD(+)-binding site is contributed by asparagine 138. Histidine 193 serves as the catalytic Proton acceptor. Threonine 248 contacts substrate.

It belongs to the LDH/MDH superfamily. LDH family. In terms of assembly, homotetramer.

Its subcellular location is the cytoplasm. It catalyses the reaction (S)-lactate + NAD(+) = pyruvate + NADH + H(+). It participates in fermentation; pyruvate fermentation to lactate; (S)-lactate from pyruvate: step 1/1. In terms of biological role, interconverts simultaneously and stereospecifically pyruvate and lactate with concomitant interconversion of NADH and NAD(+). The chain is L-lactate dehydrogenase B chain (LDHB) from Sceloporus undulatus (Eastern fence lizard).